Reading from the N-terminus, the 105-residue chain is MTITQQTKIRIKLKAYNSIILNTSCDKILDTASRTNAVAVGPIPLPTKRRIYCVLRSPHVDKDSREHFEIRSHRRIIDIHQPSSQTIDALMKLNLPSGVDIEVKL.

The protein belongs to the universal ribosomal protein uS10 family. Part of the 30S ribosomal subunit.

It localises to the plastid. The protein localises to the chloroplast. Its function is as follows. Involved in the binding of tRNA to the ribosomes. The chain is Small ribosomal subunit protein uS10c from Pyropia yezoensis (Susabi-nori).